The sequence spans 36 residues: Photosystem I reaction center subunit VIII (36 aa).

A helical membrane pass occupies residues 8-28 (SIFVPLVGLVFPAIAMASLFL).

Belongs to the PsaI family.

Its subcellular location is the plastid. It localises to the chloroplast thylakoid membrane. Functionally, may help in the organization of the PsaL subunit. The polypeptide is Photosystem I reaction center subunit VIII (Solanum bulbocastanum (Wild potato)).